The following is a 274-amino-acid chain: GCN5-related N-acetyltransferase 7, chloroplastic (274 aa).

The N-terminal 65 residues, 1–65 (MAFLCSSLPS…STFVISESVS (65 aa)), are a transit peptide targeting the chloroplast. In terms of domain architecture, N-acetyltransferase spans 75–267 (LRVRTFNELN…QRLLLWLALP (193 aa)). Residues 189–191 (VCV), 197–202 (RNGVGY), 228–230 (NEA), and tyrosine 235 each bind acetyl-CoA. Tyrosine 235 (proton donor) is an active-site residue.

This sequence belongs to the acetyltransferase family. GNAT subfamily. As to quaternary structure, oligomer. Autoacetylated. In terms of tissue distribution, expressed in green tissues.

Its subcellular location is the plastid. The protein localises to the chloroplast. It carries out the reaction an N-terminal L-alpha-aminoacyl-[protein] + acetyl-CoA = N-terminal N(alpha)-acetyl-L-alpha-aminoacyl-[protein] + CoA + H(+). The catalysed reaction is L-lysyl-[protein] + acetyl-CoA = N(6)-acetyl-L-lysyl-[protein] + CoA + H(+). The enzyme catalyses N-terminal L-alanyl-[protein] + acetyl-CoA = N-terminal N(alpha)-acetyl-L-alanyl-[protein] + CoA + H(+). It catalyses the reaction N-terminal L-seryl-[protein] + acetyl-CoA = N-terminal N(alpha)-acetyl-L-seryl-[protein] + CoA + H(+). It carries out the reaction N-terminal L-threonyl-[protein] + acetyl-CoA = N-terminal N(alpha)-acetyl-L-threonyl-[protein] + CoA + H(+). The catalysed reaction is N-terminal L-methionyl-[protein] + acetyl-CoA = N-terminal N(alpha)-acetyl-L-methionyl-[protein] + CoA + H(+). The enzyme catalyses N-terminal L-prolyl-[protein] + acetyl-CoA = N-terminal N(alpha)-acetyl-L-prolyl-[protein] + CoA + H(+). It catalyses the reaction N-terminal L-valyl-[protein] + acetyl-CoA = N-terminal N(alpha)-acetyl-L-valyl-[protein] + CoA + H(+). Protein acetyltransferase with dual specificity triggering both N-alpha-acetylation (NTA), with a large spectrum of modified N-termini, including methionine, alanine, serine, threonine and to a lower extent valine and proline as substrates, and epsilon-lysine acetylation (KA). This Arabidopsis thaliana (Mouse-ear cress) protein is GCN5-related N-acetyltransferase 7, chloroplastic.